We begin with the raw amino-acid sequence, 276 residues long: 2-hydroxy-6-oxo-2,4-heptadienoate hydrolase (276 aa).

An AB hydrolase-1 domain is found at 28 to 259 (NPVVLVHGSG…GRCGHWVQIE (232 aa)). Residues S105, D226, and H254 contribute to the active site.

It belongs to the DmpD/TodF/XylF esterase family.

It catalyses the reaction (2Z,4E)-2-hydroxy-6-oxohepta-2,4-dienoate + H2O = (2Z)-2-hydroxypenta-2,4-dienoate + acetate + H(+). It functions in the pathway xenobiotic degradation; toluene degradation. In terms of biological role, catalyzes the hydrolysis of 2-hydroxy-6-oxohepta-2,4-dienoate into 2-hydroxypenta-2,4-dienoate and acetate. This is 2-hydroxy-6-oxo-2,4-heptadienoate hydrolase (todF) from Pseudomonas putida (strain ATCC 700007 / DSM 6899 / JCM 31910 / BCRC 17059 / LMG 24140 / F1).